A 179-amino-acid polypeptide reads, in one-letter code: Large ribosomal subunit protein uL5 (179 aa).

It belongs to the universal ribosomal protein uL5 family. In terms of assembly, part of the 50S ribosomal subunit; part of the 5S rRNA/L5/L18/L25 subcomplex. Contacts the 5S rRNA and the P site tRNA. Forms a bridge to the 30S subunit in the 70S ribosome.

Functionally, this is one of the proteins that bind and probably mediate the attachment of the 5S RNA into the large ribosomal subunit, where it forms part of the central protuberance. In the 70S ribosome it contacts protein S13 of the 30S subunit (bridge B1b), connecting the 2 subunits; this bridge is implicated in subunit movement. Contacts the P site tRNA; the 5S rRNA and some of its associated proteins might help stabilize positioning of ribosome-bound tRNAs. The polypeptide is Large ribosomal subunit protein uL5 (Prochlorococcus marinus (strain SARG / CCMP1375 / SS120)).